Here is a 648-residue protein sequence, read N- to C-terminus: DNA gyrase subunit B (648 aa).

In terms of domain architecture, Toprim spans 432–546; sequence RELFIVEGNS…YGFVYLAQPP (115 aa). Residues E438, D511, and D513 each coordinate Mg(2+).

This sequence belongs to the type II topoisomerase GyrB family. As to quaternary structure, heterotetramer, composed of two GyrA and two GyrB chains. In the heterotetramer, GyrA contains the active site tyrosine that forms a transient covalent intermediate with DNA, while GyrB binds cofactors and catalyzes ATP hydrolysis. It depends on Mg(2+) as a cofactor. Mn(2+) is required as a cofactor. The cofactor is Ca(2+).

It localises to the cytoplasm. It catalyses the reaction ATP-dependent breakage, passage and rejoining of double-stranded DNA.. Functionally, a type II topoisomerase that negatively supercoils closed circular double-stranded (ds) DNA in an ATP-dependent manner to modulate DNA topology and maintain chromosomes in an underwound state. Negative supercoiling favors strand separation, and DNA replication, transcription, recombination and repair, all of which involve strand separation. Also able to catalyze the interconversion of other topological isomers of dsDNA rings, including catenanes and knotted rings. Type II topoisomerases break and join 2 DNA strands simultaneously in an ATP-dependent manner. The protein is DNA gyrase subunit B of Metamycoplasma hominis (strain ATCC 23114 / DSM 25592 / NBRC 14850 / NCTC 10111 / PG21) (Mycoplasma hominis).